Here is a 206-residue protein sequence, read N- to C-terminus: N-(5'-phosphoribosyl)anthranilate isomerase (206 aa).

This sequence belongs to the TrpF family.

It catalyses the reaction N-(5-phospho-beta-D-ribosyl)anthranilate = 1-(2-carboxyphenylamino)-1-deoxy-D-ribulose 5-phosphate. The protein operates within amino-acid biosynthesis; L-tryptophan biosynthesis; L-tryptophan from chorismate: step 3/5. This Chlamydia felis (strain Fe/C-56) (Chlamydophila felis) protein is N-(5'-phosphoribosyl)anthranilate isomerase.